Consider the following 66-residue polypeptide: MAKGKDVRVTIILECTSCVRNDIKKESAGISRYITQKNRHNTPSRLELRKFCPYCYKHTIHGEIKK.

Belongs to the bacterial ribosomal protein bL33 family.

The protein localises to the plastid. It is found in the chloroplast. In Crucihimalaya wallichii (Rock-cress), this protein is Large ribosomal subunit protein bL33c.